Reading from the N-terminus, the 511-residue chain is Cytochrome P450 monooxygenase roqR (511 aa).

The N-terminal stretch at 1 to 23 (MSGYVLLTVQLAAVLLLVTLWRA) is a signal peptide. Asn364, Asn373, and Asn383 each carry an N-linked (GlcNAc...) asparagine glycan. Heme is bound at residue Cys455.

The protein belongs to the cytochrome P450 family. Heme serves as cofactor.

It functions in the pathway alkaloid biosynthesis. Cytochrome P450 monooxygenase; part of the gene cluster that mediates the biosynthesis of the mycotoxins roquefortine C and meleagrin. The first stage is catalyzed by the dipeptide synthase roqA which condenses histidine and tryptophan to produce histidyltryptophanyldiketopiperazine (HTD). HTD is then converted to roquefortine C through two possible pathways. In the first pathway, prenyltransferase roqD transforms HTD to the intermediate roquefortine D, which is in turn converted to roquefortine C by the cytochrome P450 monooxygenase roqR. In the second pathway, HTD is first converted to the intermediate dehydrohistidyltryptophanyldi-ketopiperazine (DHTD) by roqR which is then prenylated by roqD to form roquefortine C. Roquefortine C can be further transformed to meleagrin via three more reactions including oxydation to glandicolin A by roqM, which is further reduced to glandicoline B by roqO. Finally, glandicoline B is converted to meleagrin by the glandicoline B O-methyltransferase roqN. More studies identified further branching and additional metabolites produced by the roquefortine/meleagrin cluster, including roquefortine F, roquefortine L, roquefortine M, roquefortine N and neoxaline. This chain is Cytochrome P450 monooxygenase roqR, found in Penicillium rubens (strain ATCC 28089 / DSM 1075 / NRRL 1951 / Wisconsin 54-1255) (Penicillium chrysogenum).